The chain runs to 81 residues: Small cysteine-rich protein 4 (81 aa).

The first 23 residues, 1–23 (MDTKVACLLLIILGALTVQGAVS), serve as a signal peptide directing secretion. Residues 24-25 (GN) constitute a propeptide that is removed on maturation.

This sequence belongs to the Cnidaria small cysteine-rich protein (SCRiP) family. beta subfamily. Contains 4 disulfide bonds.

The protein localises to the secreted. It is found in the nematocyst. Functionally, induces neurotoxic symptoms on zebrafish. Has also been claimed to be implied in calcification, but tests on homolog proteins suggest that proteins of this family have a neurotoxic function and not a calcification function. The chain is Small cysteine-rich protein 4 from Orbicella faveolata (Mountainous star coral).